The chain runs to 642 residues: Threonine--tRNA ligase (642 aa).

The TGS domain occupies 1–61; the sequence is MPVITLPDGS…ETDATLSIIT (61 aa). Residues 243-534 form a catalytic region; the sequence is DHRKIGKQLD…LTEETAGYFP (292 aa). C334, H385, and H511 together coordinate Zn(2+).

The protein belongs to the class-II aminoacyl-tRNA synthetase family. As to quaternary structure, homodimer. The cofactor is Zn(2+).

The protein resides in the cytoplasm. It catalyses the reaction tRNA(Thr) + L-threonine + ATP = L-threonyl-tRNA(Thr) + AMP + diphosphate + H(+). Functionally, catalyzes the attachment of threonine to tRNA(Thr) in a two-step reaction: L-threonine is first activated by ATP to form Thr-AMP and then transferred to the acceptor end of tRNA(Thr). Also edits incorrectly charged L-seryl-tRNA(Thr). The chain is Threonine--tRNA ligase from Tolumonas auensis (strain DSM 9187 / NBRC 110442 / TA 4).